Here is a 190-residue protein sequence, read N- to C-terminus: Molybdenum cofactor guanylyltransferase (190 aa).

GTP contacts are provided by residues 8–10 (LAG), K20, D64, and D98. D98 contributes to the Mg(2+) binding site.

Belongs to the MobA family. As to quaternary structure, monomer. It depends on Mg(2+) as a cofactor.

The protein resides in the cytoplasm. It catalyses the reaction Mo-molybdopterin + GTP + H(+) = Mo-molybdopterin guanine dinucleotide + diphosphate. Functionally, transfers a GMP moiety from GTP to Mo-molybdopterin (Mo-MPT) cofactor (Moco or molybdenum cofactor) to form Mo-molybdopterin guanine dinucleotide (Mo-MGD) cofactor. This is Molybdenum cofactor guanylyltransferase from Rhodobacter capsulatus (Rhodopseudomonas capsulata).